Here is a 335-residue protein sequence, read N- to C-terminus: Dihydroorotate dehydrogenase (quinone) (335 aa).

Residues 59–63 and T83 contribute to the FMN site; that span reads AGLDK. Residue K63 participates in substrate binding. A substrate-binding site is contributed by 108–112; the sequence is NRMGF. FMN-binding residues include N136 and N169. N169 serves as a coordination point for substrate. The Nucleophile role is filled by S172. Position 174 (N174) interacts with substrate. FMN-binding residues include K214 and T242. 243–244 is a binding site for substrate; sequence NT. FMN contacts are provided by residues G265, G294, and 315 to 316; that span reads YS.

It belongs to the dihydroorotate dehydrogenase family. Type 2 subfamily. Monomer. The cofactor is FMN.

It is found in the cell membrane. The enzyme catalyses (S)-dihydroorotate + a quinone = orotate + a quinol. Its pathway is pyrimidine metabolism; UMP biosynthesis via de novo pathway; orotate from (S)-dihydroorotate (quinone route): step 1/1. Its function is as follows. Catalyzes the conversion of dihydroorotate to orotate with quinone as electron acceptor. This chain is Dihydroorotate dehydrogenase (quinone), found in Neisseria meningitidis serogroup A / serotype 4A (strain DSM 15465 / Z2491).